Reading from the N-terminus, the 269-residue chain is Formamidopyrimidine-DNA glycosylase (269 aa).

The Schiff-base intermediate with DNA role is filled by proline 2. Glutamate 3 serves as the catalytic Proton donor. The Proton donor; for beta-elimination activity role is filled by lysine 57. Residues histidine 90, arginine 109, and lysine 150 each contribute to the DNA site. The segment at 235-269 (QVYGRKGEPCRICGMPVVGTKHAQRATFYCRQCQK) adopts an FPG-type zinc-finger fold. Arginine 259 acts as the Proton donor; for delta-elimination activity in catalysis.

It belongs to the FPG family. As to quaternary structure, monomer. It depends on Zn(2+) as a cofactor.

The catalysed reaction is Hydrolysis of DNA containing ring-opened 7-methylguanine residues, releasing 2,6-diamino-4-hydroxy-5-(N-methyl)formamidopyrimidine.. It carries out the reaction 2'-deoxyribonucleotide-(2'-deoxyribose 5'-phosphate)-2'-deoxyribonucleotide-DNA = a 3'-end 2'-deoxyribonucleotide-(2,3-dehydro-2,3-deoxyribose 5'-phosphate)-DNA + a 5'-end 5'-phospho-2'-deoxyribonucleoside-DNA + H(+). Functionally, involved in base excision repair of DNA damaged by oxidation or by mutagenic agents. Acts as a DNA glycosylase that recognizes and removes damaged bases. Has a preference for oxidized purines, such as 7,8-dihydro-8-oxoguanine (8-oxoG). Has AP (apurinic/apyrimidinic) lyase activity and introduces nicks in the DNA strand. Cleaves the DNA backbone by beta-delta elimination to generate a single-strand break at the site of the removed base with both 3'- and 5'-phosphates. The polypeptide is Formamidopyrimidine-DNA glycosylase (Klebsiella pneumoniae subsp. pneumoniae (strain ATCC 700721 / MGH 78578)).